The primary structure comprises 105 residues: Large ribosomal subunit protein eL36 (105 aa).

The interval 1 to 36 (MAQERSGIAVGLNKGHKTTPLNTPKTRISRSKGKAS) is disordered. The span at 27–36 (RISRSKGKAS) shows a compositional bias: basic residues.

Belongs to the eukaryotic ribosomal protein eL36 family. In terms of assembly, component of the large ribosomal subunit (LSU).

The protein resides in the cytoplasm. Functionally, component of the ribosome, a large ribonucleoprotein complex responsible for the synthesis of proteins in the cell. The small ribosomal subunit (SSU) binds messenger RNAs (mRNAs) and translates the encoded message by selecting cognate aminoacyl-transfer RNA (tRNA) molecules. The large subunit (LSU) contains the ribosomal catalytic site termed the peptidyl transferase center (PTC), which catalyzes the formation of peptide bonds, thereby polymerizing the amino acids delivered by tRNAs into a polypeptide chain. The nascent polypeptides leave the ribosome through a tunnel in the LSU and interact with protein factors that function in enzymatic processing, targeting, and the membrane insertion of nascent chains at the exit of the ribosomal tunnel. The sequence is that of Large ribosomal subunit protein eL36 from Emericella nidulans (strain FGSC A4 / ATCC 38163 / CBS 112.46 / NRRL 194 / M139) (Aspergillus nidulans).